Consider the following 955-residue polypeptide: Anoctamin-4 (955 aa).

Residues 1–352 (MEASSSGITN…FGEKIGLYFA (352 aa)) are Cytoplasmic-facing. The interval 73–97 (KDDDSLLHPGNLTSTSEDTSRLEAG) is disordered. The chain crosses the membrane as a helical span at residues 353-373 (WLGWYTGMLFPAAFIGLFVFL). Residues 374-424 (YGVTTLDHCQVSKEVCQATDIIMCPVCDKYCPFMRLSDSCVYAKVTHLFDN) lie on the Extracellular side of the membrane. The helical transmembrane segment at 425–445 (GATVFFAVFMAVWATVFLEFW) threads the bilayer. The Cytoplasmic portion of the chain corresponds to 446–505 (KRRRAVIAYDWDLIDWEEEEEEIRPQFEAKYSKKERMNPISGKPEPYQAFTDKCSRLIVS). A helical transmembrane segment spans residues 506 to 526 (ASGIFFMICVVIAAVFGIVIY). Over 527-547 (RVVTVSTFAAFKWALIRNNSQ) the chain is Extracellular. A glycan (N-linked (GlcNAc...) asparagine) is linked at Asn544. Residues 548–568 (VATTGTAVCINFCIIMLLNVL) form a helical membrane-spanning segment. The Cytoplasmic segment spans residues 569-595 (YEKVALLLTNLEQPRTESEWENSFTLK). The chain crosses the membrane as a helical span at residues 596-616 (MFLFQFVNLNSSTFYIAFFLG). At 617-715 (RFTGHPGAYL…AYGLFDEYLE (99 aa)) the chain is on the extracellular side. The helical transmembrane segment at 716-736 (MILQFGFTTIFVAAFPLAPLL) threads the bilayer. Over 737 to 768 (ALLNNIIEIRLDAYKFVTQWRRPLASRAKDIG) the chain is Cytoplasmic. The helical transmembrane segment at 769-789 (IWYGILEGIGILSVITNAFVI) threads the bilayer. Over 790–885 (AITSDFIPRL…QFWHVLAARL (96 aa)) the chain is Extracellular. 2 N-linked (GlcNAc...) asparagine glycosylation sites follow: Asn824 and Asn837. A helical transmembrane segment spans residues 886–906 (AFIIVFEHLVFCIKHLISYLI). At 907 to 955 (PDLPKDLRDRMRREKYLIQEMMYEAELERLQKERKERKKNGKAHHNEWP) the chain is on the cytoplasmic side.

This sequence belongs to the anoctamin family. As to expression, predominantly expressed in neuronal tissues. Expressed at low levels in ovary, uterus, heart and brain.

The protein resides in the cell membrane. The catalysed reaction is a 1,2-diacyl-sn-glycero-3-phospho-L-serine(in) = a 1,2-diacyl-sn-glycero-3-phospho-L-serine(out). It catalyses the reaction a beta-D-galactosyl-(1&lt;-&gt;1')-N-acylsphing-4-enine(out) = a beta-D-galactosyl-(1&lt;-&gt;1')-N-acylsphing-4-enine(in). It carries out the reaction a 1,2-diacyl-sn-glycero-3-phosphocholine(in) = a 1,2-diacyl-sn-glycero-3-phosphocholine(out). Has calcium-dependent phospholipid scramblase activity; scrambles phosphatidylserine, phosphatidylcholine and galactosylceramide. Does not exhibit calcium-activated chloride channel (CaCC) activity. In Mus musculus (Mouse), this protein is Anoctamin-4.